Consider the following 447-residue polypeptide: Tubulin beta chain (447 aa).

GTP is bound by residues Gln-11, Glu-69, Ser-138, Gly-142, Thr-143, Gly-144, Asn-204, and Asn-226. Mg(2+) is bound at residue Glu-69. A disordered region spans residues 424 to 447; the sequence is QYQEASVSEGEEEYDEEAPLEGEE. Residues 432–447 show a composition bias toward acidic residues; the sequence is EGEEEYDEEAPLEGEE.

Belongs to the tubulin family. As to quaternary structure, dimer of alpha and beta chains. A typical microtubule is a hollow water-filled tube with an outer diameter of 25 nm and an inner diameter of 15 nM. Alpha-beta heterodimers associate head-to-tail to form protofilaments running lengthwise along the microtubule wall with the beta-tubulin subunit facing the microtubule plus end conferring a structural polarity. Microtubules usually have 13 protofilaments but different protofilament numbers can be found in some organisms and specialized cells. Mg(2+) serves as cofactor.

The protein localises to the cytoplasm. It localises to the cytoskeleton. Its function is as follows. Tubulin is the major constituent of microtubules, a cylinder consisting of laterally associated linear protofilaments composed of alpha- and beta-tubulin heterodimers. Microtubules grow by the addition of GTP-tubulin dimers to the microtubule end, where a stabilizing cap forms. Below the cap, tubulin dimers are in GDP-bound state, owing to GTPase activity of alpha-tubulin. In Dothistroma septosporum (Red band needle blight fungus), this protein is Tubulin beta chain (TUB1).